A 141-amino-acid polypeptide reads, in one-letter code: Hemoglobin subunit alpha-3 (141 aa).

The residue at position 1 (Ser1) is an N-acetylserine. The Globin domain occupies 1–141 (SLSASEKAAV…VSAVLTSKYR (141 aa)). Position 58 (His58) interacts with O2. His87 lines the heme b pocket.

The protein belongs to the globin family. In terms of assembly, heterotetramer of two alpha chains and two beta chains. In terms of tissue distribution, red blood cells.

In terms of biological role, this is a tadpole (larval) alpha chain. The polypeptide is Hemoglobin subunit alpha-3 (Aquarana catesbeiana (American bullfrog)).